We begin with the raw amino-acid sequence, 277 residues long: MGIRRYKPTTPGRRGSSVADFVEITRDHPEKSLVRPLHSKGGRNVHGRITTRHQGGGHKRAYRIIDFRRDKDGVPAKVAHIEYDPNRTARIALLHYVDGEKRYILAPVKLHQGDMVSSGVGADIKPGNALPLRNIPTGTVVHAIELRPGGGAKIARSAGASVQLVAKDGPYAQLRMPSGEIRNVDVRCRATVGEVGNAEQSNINWGKAGRMRWKGRRPTVRGVAMNPVDHPHGGGEGKTSGGRHPVNPKGRPEGRTRRTKKSSDALIVRRRKQNRRR.

2 disordered regions span residues 37 to 58 (LHSKGGRNVHGRITTRHQGGGH) and 222 to 277 (GVAM…NRRR). A compositionally biased stretch (basic residues) spans 268–277 (VRRRKQNRRR).

It belongs to the universal ribosomal protein uL2 family. As to quaternary structure, part of the 50S ribosomal subunit. Forms a bridge to the 30S subunit in the 70S ribosome.

Functionally, one of the primary rRNA binding proteins. Required for association of the 30S and 50S subunits to form the 70S ribosome, for tRNA binding and peptide bond formation. It has been suggested to have peptidyltransferase activity; this is somewhat controversial. Makes several contacts with the 16S rRNA in the 70S ribosome. The protein is Large ribosomal subunit protein uL2 of Parafrankia sp. (strain EAN1pec).